A 300-amino-acid polypeptide reads, in one-letter code: GTPase Era (300 aa).

An Era-type G domain is found at 7-182 (YCGFIAIVGR…LRKGVHHFPE (176 aa)). Residues 15–22 (GRPNVGKS) are G1. Residue 15-22 (GRPNVGKS) participates in GTP binding. Positions 41–45 (QTTRH) are G2. Positions 62 to 65 (DTPG) are G3. GTP is bound by residues 62–66 (DTPGL) and 124–127 (NKVD). The segment at 124 to 127 (NKVD) is G4. The interval 154–156 (ISA) is G5. Positions 206–283 (TGEELPYSVT…HLELWVKVKS (78 aa)) constitute a KH type-2 domain.

This sequence belongs to the TRAFAC class TrmE-Era-EngA-EngB-Septin-like GTPase superfamily. Era GTPase family. Monomer.

It is found in the cytoplasm. The protein resides in the cell inner membrane. In terms of biological role, an essential GTPase that binds both GDP and GTP, with rapid nucleotide exchange. Plays a role in 16S rRNA processing and 30S ribosomal subunit biogenesis and possibly also in cell cycle regulation and energy metabolism. The chain is GTPase Era from Histophilus somni (strain 129Pt) (Haemophilus somnus).